A 333-amino-acid chain; its full sequence is 4-hydroxy-3-methylbut-2-enyl diphosphate reductase (333 aa).

Cys-34 is a binding site for [4Fe-4S] cluster. Residues His-63 and His-96 each contribute to the (2E)-4-hydroxy-3-methylbut-2-enyl diphosphate site. Dimethylallyl diphosphate is bound by residues His-63 and His-96. Isopentenyl diphosphate contacts are provided by His-63 and His-96. Cys-118 lines the [4Fe-4S] cluster pocket. His-146 serves as a coordination point for (2E)-4-hydroxy-3-methylbut-2-enyl diphosphate. His-146 contributes to the dimethylallyl diphosphate binding site. His-146 lines the isopentenyl diphosphate pocket. Residue Glu-148 is the Proton donor of the active site. Residue Thr-186 coordinates (2E)-4-hydroxy-3-methylbut-2-enyl diphosphate. Cys-216 lines the [4Fe-4S] cluster pocket. (2E)-4-hydroxy-3-methylbut-2-enyl diphosphate is bound by residues Ser-244, Ser-245, Asn-246, and Ser-289. The dimethylallyl diphosphate site is built by Ser-244, Ser-245, Asn-246, and Ser-289. The isopentenyl diphosphate site is built by Ser-244, Ser-245, Asn-246, and Ser-289.

Belongs to the IspH family. [4Fe-4S] cluster is required as a cofactor.

The enzyme catalyses isopentenyl diphosphate + 2 oxidized [2Fe-2S]-[ferredoxin] + H2O = (2E)-4-hydroxy-3-methylbut-2-enyl diphosphate + 2 reduced [2Fe-2S]-[ferredoxin] + 2 H(+). The catalysed reaction is dimethylallyl diphosphate + 2 oxidized [2Fe-2S]-[ferredoxin] + H2O = (2E)-4-hydroxy-3-methylbut-2-enyl diphosphate + 2 reduced [2Fe-2S]-[ferredoxin] + 2 H(+). It participates in isoprenoid biosynthesis; dimethylallyl diphosphate biosynthesis; dimethylallyl diphosphate from (2E)-4-hydroxy-3-methylbutenyl diphosphate: step 1/1. Its pathway is isoprenoid biosynthesis; isopentenyl diphosphate biosynthesis via DXP pathway; isopentenyl diphosphate from 1-deoxy-D-xylulose 5-phosphate: step 6/6. In terms of biological role, catalyzes the conversion of 1-hydroxy-2-methyl-2-(E)-butenyl 4-diphosphate (HMBPP) into a mixture of isopentenyl diphosphate (IPP) and dimethylallyl diphosphate (DMAPP). Acts in the terminal step of the DOXP/MEP pathway for isoprenoid precursor biosynthesis. In Mycobacterium sp. (strain KMS), this protein is 4-hydroxy-3-methylbut-2-enyl diphosphate reductase.